Here is a 500-residue protein sequence, read N- to C-terminus: Putative beta-glucosidase 5 (500 aa).

Positions 1-20 are cleaved as a signal peptide; that stretch reads MEQFFALFTIFLSFAFPGRC. A beta-D-glucoside contacts are provided by residues Gln43, His140, and 185–186; that span reads NE. Glu186 (proton donor) is an active-site residue. Cys205 and Cys212 are oxidised to a cystine. The N-linked (GlcNAc...) asparagine glycan is linked to Asn216. Residue Tyr328 participates in a beta-D-glucoside binding. The N-linked (GlcNAc...) asparagine glycan is linked to Asn361. Glu394 lines the a beta-D-glucoside pocket. The active-site Nucleophile is the Glu394. N-linked (GlcNAc...) asparagine glycosylation is present at Asn424. A beta-D-glucoside is bound by residues Trp434 and Tyr450. N-linked (GlcNAc...) asparagine glycans are attached at residues Asn456 and Asn495.

It belongs to the glycosyl hydrolase 1 family.

The enzyme catalyses Hydrolysis of terminal, non-reducing beta-D-glucosyl residues with release of beta-D-glucose.. The protein is Putative beta-glucosidase 5 of Arabidopsis thaliana (Mouse-ear cress).